We begin with the raw amino-acid sequence, 125 residues long: Snaclec B6 (125 aa).

3 disulfide bridges follow: Cys2/Cys13, Cys30/Cys119, and Cys96/Cys111. Residues 9–120 (HEGHCYKVFK…CNISQYFVCQ (112 aa)) form the C-type lectin domain. Asn95 carries an N-linked (GlcNAc...) asparagine glycan. N-linked (GlcNAc...) asparagine glycosylation occurs at Asn112.

Belongs to the snaclec family. Heterodimer; disulfide-linked. Expressed by the venom gland.

It localises to the secreted. In terms of biological role, interferes with one step of hemostasis (modulation of platelet aggregation, or coagulation cascade, for example). The sequence is that of Snaclec B6 from Macrovipera lebetinus (Levantine viper).